A 363-amino-acid polypeptide reads, in one-letter code: Glycerol-3-phosphate dehydrogenase [NAD(+)], cytoplasmic (363 aa).

NAD(+) contacts are provided by residues 11 to 16 (GSGNWG), Phe98, Lys121, and Ala155. Lys121 contacts substrate. The active-site Proton acceptor is Lys206. NAD(+) contacts are provided by Arg270 and Gln299. Residue 270–271 (RN) participates in substrate binding.

Belongs to the NAD-dependent glycerol-3-phosphate dehydrogenase family. Homodimer. In terms of tissue distribution, isoform GPDH-1 is predominant in thorax and isoform GPDH-3 in abdomen.

The protein resides in the cytoplasm. It carries out the reaction sn-glycerol 3-phosphate + NAD(+) = dihydroxyacetone phosphate + NADH + H(+). It functions in the pathway phospholipid metabolism; alpha-glycerophosphate cycle. The protein is Glycerol-3-phosphate dehydrogenase [NAD(+)], cytoplasmic of Drosophila melanogaster (Fruit fly).